The chain runs to 228 residues: Max-interacting protein 1 (228 aa).

2 disordered regions span residues 30-76 (YASS…NELE) and 160-228 (SIGS…SFAS). Residues 43-56 (QHSKPPRRLSRAQK) show a composition bias toward basic residues. Residues 57–70 (HSSGSSNTSTANRS) are compositionally biased toward polar residues. The 53-residue stretch at 67 to 119 (ANRSTHNELEKNRRAHLRLCLERLKVLIPLGPDCTRHTTLGLLNKAKAHIKKL) folds into the bHLH domain. The span at 173-183 (EREEIEVDVES) shows a compositional bias: acidic residues. Residues 207-228 (SLQSVGSDEGYSSASVKLSFAS) show a composition bias toward polar residues.

Efficient DNA binding requires dimerization with another bHLH protein. Binds DNA as a heterodimer with MAX. Interacts with SMC3. Interacts with RNF17.

The protein localises to the nucleus. Its function is as follows. Transcriptional repressor. MXI1 binds with MAX to form a sequence-specific DNA-binding protein complex which recognizes the core sequence 5'-CAC[GA]TG-3'. MXI1 thus antagonizes MYC transcriptional activity by competing for MAX. Isoform Short, which lacks a segment, has a much stronger suppressive potential and associates with a SIN3 homologous protein. This Mus musculus (Mouse) protein is Max-interacting protein 1 (Mxi1).